We begin with the raw amino-acid sequence, 137 residues long: Small ribosomal subunit protein bS16 (137 aa).

Positions 104–118 are enriched in basic and acidic residues; that stretch reads ADEKKKPVLKPKTEK. Positions 104-137 are disordered; the sequence is ADEKKKPVLKPKTEKAAPAPEAAAPEAESTEEQA. A compositionally biased stretch (low complexity) spans 119 to 130; sequence AAPAPEAAAPEA.

This sequence belongs to the bacterial ribosomal protein bS16 family.

This Clavibacter michiganensis subsp. michiganensis (strain NCPPB 382) protein is Small ribosomal subunit protein bS16.